The sequence spans 508 residues: Glycerol kinase (508 aa).

ADP is bound at residue T14. ATP is bound by residues T14, T15, and S16. T14 contacts sn-glycerol 3-phosphate. R18 lines the ADP pocket. Positions 84, 85, 136, and 245 each coordinate sn-glycerol 3-phosphate. Glycerol is bound by residues R84, E85, Y136, D245, and Q246. T267 and G314 together coordinate ADP. ATP-binding residues include T267, G314, and Q318. An ADP-binding site is contributed by N419.

It belongs to the FGGY kinase family.

It catalyses the reaction glycerol + ATP = sn-glycerol 3-phosphate + ADP + H(+). It participates in polyol metabolism; glycerol degradation via glycerol kinase pathway; sn-glycerol 3-phosphate from glycerol: step 1/1. With respect to regulation, inhibited by fructose 1,6-bisphosphate (FBP). Functionally, key enzyme in the regulation of glycerol uptake and metabolism. Catalyzes the phosphorylation of glycerol to yield sn-glycerol 3-phosphate. The sequence is that of Glycerol kinase from Bordetella pertussis (strain Tohama I / ATCC BAA-589 / NCTC 13251).